Consider the following 186-residue polypeptide: UPF0398 protein LBUL_0921 (186 aa).

It belongs to the UPF0398 family.

This chain is UPF0398 protein LBUL_0921, found in Lactobacillus delbrueckii subsp. bulgaricus (strain ATCC BAA-365 / Lb-18).